Reading from the N-terminus, the 197-residue chain is 7-methyl-GTP pyrophosphatase (197 aa).

Asp-79 (proton acceptor) is an active-site residue.

Belongs to the Maf family. YceF subfamily.

Its subcellular location is the cytoplasm. The catalysed reaction is N(7)-methyl-GTP + H2O = N(7)-methyl-GMP + diphosphate + H(+). Its function is as follows. Nucleoside triphosphate pyrophosphatase that hydrolyzes 7-methyl-GTP (m(7)GTP). May have a dual role in cell division arrest and in preventing the incorporation of modified nucleotides into cellular nucleic acids. This is 7-methyl-GTP pyrophosphatase from Dictyostelium discoideum (Social amoeba).